Reading from the N-terminus, the 304-residue chain is Acetaldehyde dehydrogenase 1 (304 aa).

Cys-131 acts as the Acyl-thioester intermediate in catalysis. NAD(+)-binding positions include 162–170 (SAGPGTRKN) and Asn-273.

It belongs to the acetaldehyde dehydrogenase family.

It catalyses the reaction acetaldehyde + NAD(+) + CoA = acetyl-CoA + NADH + H(+). The protein is Acetaldehyde dehydrogenase 1 of Dechloromonas aromatica (strain RCB).